The following is a 291-amino-acid chain: 4-hydroxy-tetrahydrodipicolinate synthase (291 aa).

Pyruvate is bound at residue Thr44. The active-site Proton donor/acceptor is the Tyr132. Catalysis depends on Lys160, which acts as the Schiff-base intermediate with substrate. Ile202 serves as a coordination point for pyruvate.

It belongs to the DapA family. As to quaternary structure, homotetramer; dimer of dimers.

The protein localises to the cytoplasm. It catalyses the reaction L-aspartate 4-semialdehyde + pyruvate = (2S,4S)-4-hydroxy-2,3,4,5-tetrahydrodipicolinate + H2O + H(+). It functions in the pathway amino-acid biosynthesis; L-lysine biosynthesis via DAP pathway; (S)-tetrahydrodipicolinate from L-aspartate: step 3/4. Catalyzes the condensation of (S)-aspartate-beta-semialdehyde [(S)-ASA] and pyruvate to 4-hydroxy-tetrahydrodipicolinate (HTPA). The protein is 4-hydroxy-tetrahydrodipicolinate synthase of Syntrophus aciditrophicus (strain SB).